We begin with the raw amino-acid sequence, 132 residues long: Fluoride-specific ion channel FluC 3 (132 aa).

Helical transmembrane passes span 4–24 (ILLV…FGGW), 32–52 (FPVG…LIMY), 66–86 (IFLT…GYES), and 95–115 (LMLM…AVYL). Gly-74 and Thr-77 together coordinate Na(+).

It belongs to the fluoride channel Fluc/FEX (TC 1.A.43) family.

Its subcellular location is the cell membrane. It catalyses the reaction fluoride(in) = fluoride(out). Na(+) is not transported, but it plays an essential structural role and its presence is essential for fluoride channel function. In terms of biological role, fluoride-specific ion channel. Important for reducing fluoride concentration in the cell, thus reducing its toxicity. The chain is Fluoride-specific ion channel FluC 3 from Methanosarcina barkeri (strain Fusaro / DSM 804).